The primary structure comprises 584 residues: Low-affinity iron/zinc ion transport protein fet4 (584 aa).

The segment at 1-28 (MTASITEIDSISEESNVESVSHLQHSPS) is disordered. Residues 1–160 (MTASITEIDS…FDLITRLAGT (160 aa)) are Extracellular-facing. The chain crosses the membrane as a helical span at residues 161–181 (SFTFILMLIILIVWAIVGGIY). Topologically, residues 182–277 (RAPDNWQIVM…WFDFICNYVS (96 aa)) are cytoplasmic. Residues 278–298 (FMVGSIIFLVVYWIGIFIWIG) form a helical membrane-spanning segment. At 299–310 (FGRMLGWSDEWQ) the chain is on the extracellular side. Residues 311 to 331 (LYINTAVAVELTFTSVFLQNV) traverse the membrane as a helical segment. Over 332–389 (RHRHMKYIDRCVTSIFRIDSVIEEELRRMMGDKEPNEEITIKMDKINLGERSIDYYAD) the chain is Cytoplasmic. Residues 390–410 (LIGSGVGVVVSTCVFVAWIAI) traverse the membrane as a helical segment. Residues 411 to 418 (GNVMHWDS) are Extracellular-facing. The chain crosses the membrane as a helical span at residues 419–439 (NWWLIIGTYTGLVGFLDGFVL). Residues 440 to 493 (RNVYFRESSKEATEIQTLIDEDYALYQKLDLPLPHEHITNYKSTFGGSLSQWIG) lie on the Cytoplasmic side of the membrane. Residues 494–514 (WLCALPISVLFSVFVILGLII) traverse the membrane as a helical segment. At 515–526 (AAGSLRFNETAQ) the chain is on the extracellular side. Asparagine 522 carries N-linked (GlcNAc...) asparagine glycosylation. Residues 527–547 (LFCNTPTMIIEGALLIVLIEA) form a helical membrane-spanning segment. The Cytoplasmic portion of the chain corresponds to 548-584 (HNIANLKRRIQFRQIHLRRLTILKMLAGDNYSTTSTV).

This sequence belongs to the FET4 family.

It localises to the golgi apparatus membrane. The protein resides in the cell membrane. Functionally, required for Fe(2+) ion low affinity uptake. Has a role in zinc uptake under conditions of zinc limitation. This Schizosaccharomyces pombe (strain 972 / ATCC 24843) (Fission yeast) protein is Low-affinity iron/zinc ion transport protein fet4 (fet4).